Reading from the N-terminus, the 130-residue chain is Ribosome biogenesis inhibitor MINAS-60 (130 aa).

The disordered stretch occupies residues 61-130; it reads SKVQRIPTRP…RRRRPVTSSC (70 aa). Residues 109–130 show a composition bias toward basic residues; that stretch reads KGRRRRRRMRRRRRRRPVTSSC.

In terms of assembly, interacts with 60S ribosome assembly factors GTPBP4 and MRTO4.

The protein localises to the nucleus. The protein resides in the nucleolus. Acts as a late-stage inhibitor of pre-60S ribosome assembly by preventing pre-60S ribosome export from nucleus. The polypeptide is Ribosome biogenesis inhibitor MINAS-60 (Mus musculus (Mouse)).